The sequence spans 161 residues: Allophycocyanin beta chain (161 aa).

Asn-71 carries the N4-methylasparagine modification. Cys-81 contributes to the (2R,3E)-phycocyanobilin binding site.

The protein belongs to the phycobiliprotein family. As to quaternary structure, heterodimer of an alpha and a beta chain. Post-translationally, contains one covalently linked phycocyanobilin chromophore.

It is found in the cellular thylakoid membrane. Light-harvesting photosynthetic bile pigment-protein from the phycobiliprotein complex. Allophycocyanin has a maximum absorption at approximately 650 nanometers. The polypeptide is Allophycocyanin beta chain (apcB) (Synechococcus sp. (strain ATCC 27144 / PCC 6301 / SAUG 1402/1) (Anacystis nidulans)).